The primary structure comprises 415 residues: Mitochondrial tRNA-specific 2-thiouridylase 1 (415 aa).

ATP-binding positions include 37–44 (AMSGGVDS) and M63. An interaction with target base in tRNA region spans residues 124 to 126 (NPD). The Nucleophile role is filled by C129. A disulfide bridge links C129 with C234. Residue G159 participates in ATP binding. An interaction with tRNA region spans residues 183 to 185 (KDQ). C234 acts as the Cysteine persulfide intermediate in catalysis. Positions 356 to 357 (RH) are interaction with tRNA.

The protein belongs to the MnmA/TRMU family.

It localises to the mitochondrion. It catalyses the reaction 5-taurinomethyluridine(34) in tRNA + S-sulfanyl-L-cysteinyl-[protein] + AH2 + ATP = 5-taurinomethyl-2-thiouridine(34) in tRNA + L-cysteinyl-[protein] + A + AMP + diphosphate + H(+). Its function is as follows. Catalyzes the 2-thiolation of uridine at the wobble position (U34) of mitochondrial tRNA(Lys), tRNA(Glu) and tRNA(Gln). Required for the formation of 5-taurinomethyl-2-thiouridine (tm5s2U) of mitochondrial tRNA(Lys), tRNA(Glu), and tRNA(Gln) at the wobble position. ATP is required to activate the C2 atom of the wobble base. This Schizosaccharomyces pombe (strain 972 / ATCC 24843) (Fission yeast) protein is Mitochondrial tRNA-specific 2-thiouridylase 1.